The primary structure comprises 893 residues: MADTTVDKLATEVGKSTDRLVEQFSQAGIKKSANDTVSESEKQQLLDFLKKQHGGDAAPTKMTLQRKSVSTLSVAGSGGQSKDVKVEVRKKRTFVKRDEAAEAELAAAAKAEEAKAAEVAKTAAEAKAKLDAEAKAKAKADAEAKAKAKVLTEKPVQESAEDKAAKAEEAKLLAAQDAAAKSKADEDVAAAAEVARRLAEENEKRWAEEEKARKEAEKTVDHHVTTSTEARAAEDTADANAEKRGRRPRKPSANAGNNANANAGAGKPGGKGKRGKDNRRDSRNSRNSRNNRSVAPESMDHAFTKPAAVVKADVSIGETVSVSELASKMSIKATEIIKQMMKMGSMVTINQVLDQETAQLVAEEMGHKVVLTRENELEHQVLADRNGDVLAESRAPVVTIMGHVDHGKTSLLDYIRRAKVASGEAGGITQHIGAYHVETENGMITFLDTPGHAAFTAMRARGAKATDIVILVVAADDGVMPQTIEAIQHAKAGGVPLIVAVNKMDKPEADPDRVKSELSQHGVMSEDWGGNNMFVNVSAKTGAGIDELLEGILLEAEVLELKAIKEGMAAGVVVESKLDKGRGPVATVLVQEGTLKQGDIVLCGLEYGKVRAMRDENGKAITEAGPSIPVEILGLSGVPSAGDEATVVRDERKAREVALYRQGKFRDVKLARQQKSKLENMFANMTEGEVEELNIVLKADVQGSLEAICDSLNALSTAEVKVNIIARGVGGLTETDATLAAASNAIMVGFNVRADAQARKVVESESVDLRYYSIIYQLIDEVRDAMSGLLAPEFKQEIIGLAEVRDVFKSPKIGAIAGCMVTEGTIKRSAPIRVLRDNIVIYEGELESLRRFKDDVSDVRNGMECGIGVKNYNDVRVGDQIEVFETVEIARTL.

Disordered stretches follow at residues 135–169 (KAKA…KAEE) and 201–300 (ENEK…ESMD). Residues 201–224 (ENEKRWAEEEKARKEAEKTVDHHV) are compositionally biased toward basic and acidic residues. The span at 251-265 (PSANAGNNANANAGA) shows a compositional bias: low complexity. In terms of domain architecture, tr-type G spans 393-562 (SRAPVVTIMG…LLEAEVLELK (170 aa)). Residues 402 to 409 (GHVDHGKT) are G1. 402–409 (GHVDHGKT) lines the GTP pocket. A G2 region spans residues 427–431 (GITQH). The G3 stretch occupies residues 448–451 (DTPG). Residues 448–452 (DTPGH) and 502–505 (NKMD) each bind GTP. Residues 502–505 (NKMD) are G4. Residues 538–540 (SAK) form a G5 region.

It belongs to the TRAFAC class translation factor GTPase superfamily. Classic translation factor GTPase family. IF-2 subfamily.

It is found in the cytoplasm. One of the essential components for the initiation of protein synthesis. Protects formylmethionyl-tRNA from spontaneous hydrolysis and promotes its binding to the 30S ribosomal subunits. Also involved in the hydrolysis of GTP during the formation of the 70S ribosomal complex. In Shewanella halifaxensis (strain HAW-EB4), this protein is Translation initiation factor IF-2.